A 245-amino-acid polypeptide reads, in one-letter code: MTLTASSSSRAVTNSPVVVALDYHNRDAAMAFIDKIDPRDCRLKVGKEMFTLFGPQFVRELQQRGFDIFLDLKFHDIPNTAAHAVAAAADLGVWMVNVHASGGARMMAAAREALVPFGKDAPLLIAVTVLTSMEASDLADLGVTLSPADYAERLAALTQKCGLDGVVCSAQEAVRFKQVFGQEFKLVTPGIRPQGSDAGDQRRIMTPEQALSAGVDYMVIGRPVTQSVDPAQTLKAINASLQRSA.

Substrate contacts are provided by residues aspartate 22, lysine 44, 71–80 (DLKFHDIPNT), threonine 131, arginine 192, glutamine 201, glycine 221, and arginine 222. The Proton donor role is filled by lysine 73.

Belongs to the OMP decarboxylase family. Type 1 subfamily. Homodimer.

The enzyme catalyses orotidine 5'-phosphate + H(+) = UMP + CO2. The protein operates within pyrimidine metabolism; UMP biosynthesis via de novo pathway; UMP from orotate: step 2/2. In terms of biological role, catalyzes the decarboxylation of orotidine 5'-monophosphate (OMP) to uridine 5'-monophosphate (UMP). This chain is Orotidine 5'-phosphate decarboxylase, found in Escherichia coli O127:H6 (strain E2348/69 / EPEC).